The sequence spans 141 residues: Nucleoside diphosphate kinase (141 aa).

6 residues coordinate ATP: Lys11, Phe59, Arg87, Thr93, Arg104, and Asn114. The Pros-phosphohistidine intermediate role is filled by His117.

Belongs to the NDK family. Homotetramer. The cofactor is Mg(2+).

It is found in the cytoplasm. It catalyses the reaction a 2'-deoxyribonucleoside 5'-diphosphate + ATP = a 2'-deoxyribonucleoside 5'-triphosphate + ADP. It carries out the reaction a ribonucleoside 5'-diphosphate + ATP = a ribonucleoside 5'-triphosphate + ADP. Its function is as follows. Major role in the synthesis of nucleoside triphosphates other than ATP. The ATP gamma phosphate is transferred to the NDP beta phosphate via a ping-pong mechanism, using a phosphorylated active-site intermediate. The polypeptide is Nucleoside diphosphate kinase (Proteus mirabilis (strain HI4320)).